The following is a 1085-amino-acid chain: DNA polymerase (1085 aa).

Positions 1059 to 1085 are disordered; that stretch reads YDQKRPNPRPQEPLLENPFWDDSSQTA.

It belongs to the DNA polymerase type-B family. Heterodimer with the terminal protein; this heterodimer binds to bp 9 to 18 of the genome. Forms a complex with viral pTP, DBP and hosts NFIA and POU2F1/OCT1 for initiation of replication.

Its subcellular location is the host nucleus. It catalyses the reaction DNA(n) + a 2'-deoxyribonucleoside 5'-triphosphate = DNA(n+1) + diphosphate. Functionally, eukaryotic-type DNA polymerase involved in viral genomic replication. DNA synthesis is protein primed, and acts in a strand displacement replication. Its function is as follows. Eukaryotic-type DNA polymerase involved in viral genomic replication. DNA synthesis is protein primed, and acts in a strand displacement replication. Assembles in complex with viral pTP, DBP, host NFIA and host POU2F1/OCT1 on viral origin of replication. The polymerase covalently transfers dCMP onto pTP, thereby initiating complementary strand synthesis. The sequence is that of DNA polymerase from Pantherophis guttatus (Corn snake).